The sequence spans 553 residues: Dihydroxy-acid dehydratase (553 aa).

D78 contacts Mg(2+). C119 is a binding site for [2Fe-2S] cluster. Mg(2+) contacts are provided by D120 and K121. The residue at position 121 (K121) is an N6-carboxylysine. C193 contributes to the [2Fe-2S] cluster binding site. E441 serves as a coordination point for Mg(2+). The Proton acceptor role is filled by S467.

Belongs to the IlvD/Edd family. In terms of assembly, homodimer. [2Fe-2S] cluster serves as cofactor. The cofactor is Mg(2+).

It carries out the reaction (2R)-2,3-dihydroxy-3-methylbutanoate = 3-methyl-2-oxobutanoate + H2O. The catalysed reaction is (2R,3R)-2,3-dihydroxy-3-methylpentanoate = (S)-3-methyl-2-oxopentanoate + H2O. The protein operates within amino-acid biosynthesis; L-isoleucine biosynthesis; L-isoleucine from 2-oxobutanoate: step 3/4. It participates in amino-acid biosynthesis; L-valine biosynthesis; L-valine from pyruvate: step 3/4. Functions in the biosynthesis of branched-chain amino acids. Catalyzes the dehydration of (2R,3R)-2,3-dihydroxy-3-methylpentanoate (2,3-dihydroxy-3-methylvalerate) into 2-oxo-3-methylpentanoate (2-oxo-3-methylvalerate) and of (2R)-2,3-dihydroxy-3-methylbutanoate (2,3-dihydroxyisovalerate) into 2-oxo-3-methylbutanoate (2-oxoisovalerate), the penultimate precursor to L-isoleucine and L-valine, respectively. The chain is Dihydroxy-acid dehydratase from Geotalea daltonii (strain DSM 22248 / JCM 15807 / FRC-32) (Geobacter daltonii).